The sequence spans 149 residues: Endonuclease I (149 aa).

Homodimer.

The enzyme catalyses Endonucleolytic cleavage to 5'-phosphooligonucleotide end-products.. In terms of biological role, junction-resolving enzyme that selectively binds and cleaves four-way (Holliday) DNA junctions present after viral genomic replication. These intermediates are created during DNA repair, processing of stalled replication forks and homologous genetic recombination. Introduces two nicks on the two non-crossing strands, at 5' sides of the junction. Also participates together with gp6 in the degradation of host chromosome to provide nucleotides for phage DNA synthesis. In Escherichia coli (Bacteriophage T7), this protein is Endonuclease I.